A 308-amino-acid polypeptide reads, in one-letter code: Acetyl-coenzyme A carboxylase carboxyl transferase subunit beta (308 aa).

The 270-residue stretch at 25–294 (VWTKCTSCEQ…PLVVSVNDSP (270 aa)) folds into the CoA carboxyltransferase N-terminal domain. Positions 29, 32, 48, and 51 each coordinate Zn(2+). The C4-type zinc finger occupies 29 to 51 (CTSCEQVLYHAELERNLEVCPKC).

The protein belongs to the AccD/PCCB family. As to quaternary structure, acetyl-CoA carboxylase is a heterohexamer composed of biotin carboxyl carrier protein (AccB), biotin carboxylase (AccC) and two subunits each of ACCase subunit alpha (AccA) and ACCase subunit beta (AccD). The cofactor is Zn(2+).

The protein localises to the cytoplasm. It carries out the reaction N(6)-carboxybiotinyl-L-lysyl-[protein] + acetyl-CoA = N(6)-biotinyl-L-lysyl-[protein] + malonyl-CoA. The protein operates within lipid metabolism; malonyl-CoA biosynthesis; malonyl-CoA from acetyl-CoA: step 1/1. Its function is as follows. Component of the acetyl coenzyme A carboxylase (ACC) complex. Biotin carboxylase (BC) catalyzes the carboxylation of biotin on its carrier protein (BCCP) and then the CO(2) group is transferred by the transcarboxylase to acetyl-CoA to form malonyl-CoA. The sequence is that of Acetyl-coenzyme A carboxylase carboxyl transferase subunit beta from Vibrio vulnificus (strain CMCP6).